A 264-amino-acid polypeptide reads, in one-letter code: Probable aquaporin TIP3-1 (264 aa).

Helical transmembrane passes span A28–L48 and G62–V82. Positions N90–A92 match the NPA 1 motif. The next 3 membrane-spanning stretches (helical) occupy residues L105 to L125, A149 to I169, and V176 to G196. An NPA 2 motif is present at residues N204–A206. The chain crosses the membrane as a helical span at residues Y224–I244.

The protein belongs to the MIP/aquaporin (TC 1.A.8) family. TIP (TC 1.A.8.10) subfamily. In terms of tissue distribution, expressed in leaves and at lower levels in roots.

The protein resides in the vacuole membrane. Aquaporins facilitate the transport of water and small neutral solutes across cell membranes. May be involved in transport from the vacuolar compartment to the cytoplasm. This is Probable aquaporin TIP3-1 (TIP3-1) from Oryza sativa subsp. japonica (Rice).